Reading from the N-terminus, the 265-residue chain is Indole-3-glycerol phosphate synthase (265 aa).

Belongs to the TrpC family.

It carries out the reaction 1-(2-carboxyphenylamino)-1-deoxy-D-ribulose 5-phosphate + H(+) = (1S,2R)-1-C-(indol-3-yl)glycerol 3-phosphate + CO2 + H2O. It participates in amino-acid biosynthesis; L-tryptophan biosynthesis; L-tryptophan from chorismate: step 4/5. In Xanthomonas euvesicatoria pv. vesicatoria (strain 85-10) (Xanthomonas campestris pv. vesicatoria), this protein is Indole-3-glycerol phosphate synthase.